The sequence spans 441 residues: MGSRHQVVQQQNRGDVVPGAIKQKSMAVEKKNRRALGDIGNVVTVRGVEGKALPQVSRPITRGFCAQLIANAEAAAAENNKNSLAVNAKGADGALPIKRAVARVPVQKKTVKSKPQEIIEISPDTEKKKAPVLEKEITGEKSLKKKAPTLTSTLTARSKAASVVRTKPKEQIVDIDAADVNNDLAVVEYVEDMYKFYKSAENDSRPHDYMDSQPEINEKMRAILIDWLVQVHYKFELSPETLYLTINIVDRYLASKTTSRRELQLLGMSSMLIASKYEEIWAPEVNDLVCISDGSYSNEQVLRMEKKILGALEWYLTVPTPYVFLVRFIKASLPDSDVEKNMVYFLAELGMMNYATIIMYCPSMIAAAAVYAARCTLNKMPIWNETLRMHTGFSEVQLMDCAKLLIDFHGGSTDQKLQGIYRKYSRLEKGAVALLPQPLLA.

Belongs to the cyclin family. Cyclin AB subfamily. Interacts with the CDC2 and CDK2 protein kinases to form a serine/threonine kinase holoenzyme complex. The cyclin subunit imparts substrate specificity to the complex.

Its function is as follows. Essential for the control of the cell cycle at the G2/M (mitosis) transition. G2/M cyclins accumulate steadily during G2 and are abruptly destroyed at mitosis. The sequence is that of G2/mitotic-specific cyclin-2 from Antirrhinum majus (Garden snapdragon).